A 75-amino-acid polypeptide reads, in one-letter code: Carwaprin-a (75 aa).

A signal peptide spans methionine 1–glycine 24. A WAP domain is found at arginine 27–isoleucine 72. 4 disulfides stabilise this stretch: cysteine 34–cysteine 60, cysteine 43–cysteine 64, cysteine 47–cysteine 59, and cysteine 53–cysteine 68.

The protein belongs to the venom waprin family. In terms of tissue distribution, expressed by the venom gland.

The protein localises to the secreted. Damages membranes of susceptible bacteria. Has no hemolytic activity. Not toxic to mice. Does not inhibit the proteinases elastase and cathepsin G. This is Carwaprin-a from Tropidechis carinatus (Australian rough-scaled snake).